Here is a 102-residue protein sequence, read N- to C-terminus: Co-chaperonin GroES (102 aa).

Belongs to the GroES chaperonin family. Heptamer of 7 subunits arranged in a ring. Interacts with the chaperonin GroEL.

The protein resides in the cytoplasm. Its function is as follows. Together with the chaperonin GroEL, plays an essential role in assisting protein folding. The GroEL-GroES system forms a nano-cage that allows encapsulation of the non-native substrate proteins and provides a physical environment optimized to promote and accelerate protein folding. GroES binds to the apical surface of the GroEL ring, thereby capping the opening of the GroEL channel. This Chlamydia trachomatis serovar L2 (strain ATCC VR-902B / DSM 19102 / 434/Bu) protein is Co-chaperonin GroES.